We begin with the raw amino-acid sequence, 37 residues long: Large ribosomal subunit protein bL36A (37 aa).

It belongs to the bacterial ribosomal protein bL36 family.

This Leifsonia xyli subsp. xyli (strain CTCB07) protein is Large ribosomal subunit protein bL36A.